Reading from the N-terminus, the 713-residue chain is NAD(+) hydrolase SARM1 (713 aa).

An ARM 1 repeat occupies 53-96 (DVQAVLDGSLPALRSAIRTLRSSKDTGDLEETRRAIAETFQLVE). NAD(+) contacts are provided by residues Trp-99, Arg-106, 145-153 (EQILVSENR), and 186-189 (HMFK). ARM repeat units follow at residues 110–149 (EEICNRIRLDGGLELLLQLMQTPAVEITYESAKLLEQILV), 151–189 (ENRDYVARMGLGVILNLTREQEDAQLARSVSGILEHMFK), 192–231 (EETSAQLITNGALDTILYWCRGTDPTVLRHCAVALSNCAM), 233–276 (GGHR…LAAN), 277–310 (REMEKEVVKSGTLELVEPFIASLDPDEFARNMLD), 311–350 (SADSMQGRTAADLQHLLPLLDGTRLEGKCIAAFYLCVETS), and 355–398 (QRNT…EEVP). 2 SAM domains span residues 408–472 (WKSG…LKTY) and 478–537 (CDPN…ILSA). One can recognise a TIR domain in the interval 552–695 (KGPDVFISYR…KILRFLEGCP (144 aa)). Residues 561–562 (RR) and Glu-591 each bind NAD(+). Glu-634 is an active-site residue.

The protein belongs to the SARM1 family. As to quaternary structure, homooctamer; forms an octameric ring via SAM domains.

Its subcellular location is the cytoplasm. It is found in the cell projection. The protein localises to the axon. The protein resides in the dendrite. It localises to the synapse. Its subcellular location is the mitochondrion. It carries out the reaction NAD(+) + H2O = ADP-D-ribose + nicotinamide + H(+). It catalyses the reaction NAD(+) = cyclic ADP-beta-D-ribose + nicotinamide + H(+). The enzyme catalyses NADP(+) + H2O = ADP-D-ribose 2'-phosphate + nicotinamide + H(+). With respect to regulation, autoinhibited: in the inactive state, the enzymatic TIR domain is held apart by the autoinhibiting ARM repeats. NAD(+)-binding to ARM repeats maintains an inactive state by promoting interaction between ARM repeats and the TIR domain, thereby facilitating inhibition of the enzymatic TIR domain. Following activation, possibly by nicotinamide mononucleotide (NMN), auto-inhibitory interactions are released, allowing self-association of the TIR domains and subsequent activation of the NAD(+) hydrolase (NADase) activity. Self-association of TIR domains is facilitated by the octamer of SAM domains. Functionally, NAD(+) hydrolase, which plays a key role in axonal degeneration following injury by regulating NAD(+) metabolism. Acts as a negative regulator of MYD88- and TRIF-dependent toll-like receptor signaling pathway by promoting Wallerian degeneration, an injury-induced form of programmed subcellular death which involves degeneration of an axon distal to the injury site. Wallerian degeneration is triggerred by NAD(+) depletion: in response to injury, SARM1 is activated and catalyzes cleavage of NAD(+) into ADP-D-ribose (ADPR), cyclic ADPR (cADPR) and nicotinamide; NAD(+) cleavage promoting cytoskeletal degradation and axon destruction. Also able to hydrolyze NADP(+), but not other NAD(+)-related molecules. Can activate neuronal cell death in response to stress. The sequence is that of NAD(+) hydrolase SARM1 from Danio rerio (Zebrafish).